A 715-amino-acid chain; its full sequence is Glycine--tRNA ligase beta subunit (715 aa).

The protein belongs to the class-II aminoacyl-tRNA synthetase family. Tetramer of two alpha and two beta subunits.

The protein localises to the cytoplasm. It carries out the reaction tRNA(Gly) + glycine + ATP = glycyl-tRNA(Gly) + AMP + diphosphate. The polypeptide is Glycine--tRNA ligase beta subunit (Nitrosomonas eutropha (strain DSM 101675 / C91 / Nm57)).